Reading from the N-terminus, the 467-residue chain is Ankyrin repeat and SOCS box protein 10 (467 aa).

7 ANK repeats span residues 115-144, 147-176, 180-209, 214-243, 247-289, 293-322, and 326-361; these read ELTTPLHVAASRGHTEVLRLLLRRRARPDS, GGRTALHEACAAGHTACVHVLLVAGADPNI, DGKRPLHLCRGPGTLECAELLLRFGARVDG, EEETPLHVAARLGHVELADLLLRRGACPDA, EGWT…DADA, DKQRPLHLACRRGHAAVVELLLSCGVSANT, and GGHTPLHCALQGPAAALAQSPEHVVRALLNHGAVRV. Positions 412–464 constitute an SOCS box domain; the sequence is YSSLFALVRQPRSLQHLSRCALRSHLEGSLPQALPRLPLPPRLLRYLQLDFEG.

It belongs to the ankyrin SOCS box (ASB) family. As to expression, expressed in the eye. The highest expression is observed in the iris, with moderate levels in the trabecular meshwork (TM), the lamina, and the optic nerve; slightly lower levels in the ciliary body, retina, and choroid; and very low levels in the lens.

It localises to the cytoplasm. The protein resides in the nucleus. It participates in protein modification; protein ubiquitination. May be a substrate-recognition component of a SCF-like ECS (Elongin-Cullin-SOCS-box protein) E3 ubiquitin-protein ligase complex which mediates the ubiquitination and subsequent proteasomal degradation of target proteins. This Homo sapiens (Human) protein is Ankyrin repeat and SOCS box protein 10 (ASB10).